Here is a 169-residue protein sequence, read N- to C-terminus: Peptide methionine sulfoxide reductase MsrA 1 (169 aa).

C12 is a catalytic residue.

Belongs to the MsrA Met sulfoxide reductase family.

The enzyme catalyses L-methionyl-[protein] + [thioredoxin]-disulfide + H2O = L-methionyl-(S)-S-oxide-[protein] + [thioredoxin]-dithiol. It catalyses the reaction [thioredoxin]-disulfide + L-methionine + H2O = L-methionine (S)-S-oxide + [thioredoxin]-dithiol. Has an important function as a repair enzyme for proteins that have been inactivated by oxidation. Catalyzes the reversible oxidation-reduction of methionine sulfoxide in proteins to methionine. This Staphylococcus aureus (strain Mu50 / ATCC 700699) protein is Peptide methionine sulfoxide reductase MsrA 1 (msrA1).